The sequence spans 250 residues: Adenosine 5'-phosphosulfate reductase (250 aa).

[4Fe-4S] cluster-binding residues include Cys-119, Cys-120, Cys-202, and Cys-205. The active-site Nucleophile; cysteine thiosulfonate intermediate is the Cys-230.

This sequence belongs to the PAPS reductase family. CysH subfamily. The cofactor is [4Fe-4S] cluster.

The protein localises to the cytoplasm. The catalysed reaction is [thioredoxin]-disulfide + sulfite + AMP + 2 H(+) = adenosine 5'-phosphosulfate + [thioredoxin]-dithiol. It functions in the pathway sulfur metabolism; hydrogen sulfide biosynthesis; sulfite from sulfate. Functionally, catalyzes the formation of sulfite from adenosine 5'-phosphosulfate (APS) using thioredoxin as an electron donor. The protein is Adenosine 5'-phosphosulfate reductase of Burkholderia cepacia (Pseudomonas cepacia).